The primary structure comprises 283 residues: Phosphatidylglycerol--prolipoprotein diacylglyceryl transferase (283 aa).

Helical transmembrane passes span L14–L34, M56–Y76, and I88–A108. R139 is a binding site for a 1,2-diacyl-sn-glycero-3-phospho-(1'-sn-glycerol). A helical transmembrane segment spans residues M258–G278.

The protein belongs to the Lgt family.

The protein localises to the cell inner membrane. It carries out the reaction L-cysteinyl-[prolipoprotein] + a 1,2-diacyl-sn-glycero-3-phospho-(1'-sn-glycerol) = an S-1,2-diacyl-sn-glyceryl-L-cysteinyl-[prolipoprotein] + sn-glycerol 1-phosphate + H(+). It participates in protein modification; lipoprotein biosynthesis (diacylglyceryl transfer). Its function is as follows. Catalyzes the transfer of the diacylglyceryl group from phosphatidylglycerol to the sulfhydryl group of the N-terminal cysteine of a prolipoprotein, the first step in the formation of mature lipoproteins. The polypeptide is Phosphatidylglycerol--prolipoprotein diacylglyceryl transferase (Chromobacterium violaceum (strain ATCC 12472 / DSM 30191 / JCM 1249 / CCUG 213 / NBRC 12614 / NCIMB 9131 / NCTC 9757 / MK)).